The primary structure comprises 274 residues: Thiamine kinase (274 aa).

This sequence belongs to the thiamine kinase family.

The catalysed reaction is thiamine + ATP = thiamine phosphate + ADP + H(+). The protein operates within cofactor biosynthesis; thiamine diphosphate biosynthesis; thiamine phosphate from thiamine: step 1/1. Catalyzes the ATP-dependent phosphorylation of thiamine to thiamine phosphate. Is involved in thiamine salvage. In Shigella boydii serotype 4 (strain Sb227), this protein is Thiamine kinase.